The sequence spans 502 residues: Keratin, type II microfibrillar, component 5 (502 aa).

Position 1 is a blocked amino end (Ser) (S1). The interval 1–122 is head; that stretch reads SCRSYRISPG…PNAQCVKHQE (122 aa). Positions 122–433 constitute an IF rod domain; sequence EKEQIKNLNS…RLLEGEEQRL (312 aa). Positions 123–157 are coil 1A; sequence KEQIKNLNSRFAAFIDKVRFLEQQNKLLETKWQFY. The interval 158-167 is linker 1; sequence QNQRCCESNL. A coil 1B region spans residues 168–268; it reads EPLFNGYIET…YDEEIQILNA (101 aa). K228 is covalently cross-linked (Glycyl lysine isopeptide (Lys-Gly) (interchain with G-Cter in SUMO1)). Positions 269-285 are linker 12; sequence HISDTSVIVKMDNSRDL. A coil 2 region spans residues 286–429; sequence NMDCVVAEIK…ATYRRLLEGE (144 aa). The tail stretch occupies residues 430 to 502; that stretch reads EQRLCEGVGS…CGSSRSVRFA (73 aa).

This sequence belongs to the intermediate filament family. As to expression, hard keratin wool.

Its function is as follows. Wool microfibrillar keratin. In Ovis aries (Sheep), this protein is Keratin, type II microfibrillar, component 5.